The chain runs to 294 residues: Nucleotide-binding protein CLL_A3342 (294 aa).

ATP is bound at residue 8 to 15 (GLSGAGKT). Position 59 to 62 (59 to 62 (DIRG)) interacts with GTP.

It belongs to the RapZ-like family.

Displays ATPase and GTPase activities. The protein is Nucleotide-binding protein CLL_A3342 of Clostridium botulinum (strain Eklund 17B / Type B).